Here is a 339-residue protein sequence, read N- to C-terminus: MKLMKLLKLNINNNNNNKLLLKNLLLLMNKNRLMNKLSNNNKYLSELNNKGNSLQHLNNMNNWKLQNYNYNKNNTINNYINSKLINKLLYKLMSLKNNKIIISKPLYKINMNVINIRFYYYNMNNYNYNNNIYYINMINKLMNRLNINMNNLSNILSYYYNKKVIIEPIKLKYLYNNNEIMTKYISLLDNNKYNNGLLMEYQRTLNNIMPKLNDHNISMNYINNINNINKLKYNNILLNNNNNINNIYNNININNNMNLLMFKYLIGWSIMLKGRLNKNISRISTTYLNNGTFNNKKYLWGNLNNNFKLNYINSNNNIYNYNNINKNGKYNIKVKLNYI.

Belongs to the universal ribosomal protein uS3 family.

It localises to the mitochondrion. Functionally, essential for mitochondrial protein synthesis and required for the maturation of small ribosomal subunits. In Candida glabrata (strain ATCC 2001 / BCRC 20586 / JCM 3761 / NBRC 0622 / NRRL Y-65 / CBS 138) (Yeast), this protein is Small ribosomal subunit protein uS3m (VAR1).